Here is a 249-residue protein sequence, read N- to C-terminus: MSLEDPFFVVRGEVQKAVNTARGLYQRWCELLQESAAVGREELDWTTNELRNGLRSIEWDLEDLEETIGIVEANPGKFKLPAGDLQERKVFVERMREAVQEMKDHMVSPTAVAFLERNNREILAGKPAAQKSPSDLLDASAVSATSRYIEEQQATQQLIMDEQDQQLEMVSGSIQVLKHMSGRVGEELDEQGIMLDAFAQEMDHTQSRMDGVLRKLAKVSHMTSDRRQWCAIAVLVGVLLLVLILLFSL.

The residue at position 2 (Ser2) is an N-acetylserine. At 2 to 228 (SLEDPFFVVR…VSHMTSDRRQ (227 aa)) the chain is on the cytoplasmic side. Residues 41–69 (EELDWTTNELRNGLRSIEWDLEDLEETIG) are a coiled coil. Position 108 is a phosphoserine (Ser108). A Phosphothreonine modification is found at Thr110. Ser134, Ser140, and Ser143 each carry phosphoserine. A t-SNARE coiled-coil homology domain is found at 157-219 (QLIMDEQDQQ…DGVLRKLAKV (63 aa)). A helical; Anchor for type IV membrane protein transmembrane segment spans residues 229 to 249 (WCAIAVLVGVLLLVLILLFSL).

Belongs to the syntaxin family. In terms of assembly, interacts with VPS52. As to expression, expressed at high levels in heart, skeletal muscle and pancreas.

The protein localises to the golgi apparatus membrane. SNARE involved in vesicular transport from the late endosomes to the trans-Golgi network. In Homo sapiens (Human), this protein is Syntaxin-10 (STX10).